Here is a 488-residue protein sequence, read N- to C-terminus: Surface lipoprotein assembly modifier 1 (488 aa).

An N-terminal signal peptide occupies residues 1-31; that stretch reads MVIFYFCGKTFMPARNRWMLLLPLLASAAYA. The N-terminal domain stretch occupies residues 32-202; sequence EETPREPDLR…LYRKALRERD (171 aa). TPR repeat units follow at residues 118–151 and 171–204; these read MLALYAQGILAQADGRVKEAISHYRELIAAQPDA and AADQFDRLKAENLPPQLMEQVELYRKALRERDAW. The tract at residues 203 to 488 is C-terminal probable beta barrel, partially restores export of lipoproteins; that stretch reads AWKVNGGFSV…RAFVEFNKTF (286 aa). 14 beta stranded membrane passes run 204-214, 241-252, 257-267, 280-291, 294-304, 316-325, 330-340, 354-364, 368-377, 393-402, 407-417, 439-448, 455-464, and 478-488; these read WKVNGGFSVTR, VNYRLGAEKKWS, WYTTAGGDVSG, TAGVSGGIGFAD, KDAGLAVFHER, NGARLYFNRW, WQTLSSAEWGR, LQISNSLVFYR, QYWMGGLDFY, GLRFAWGQEW, LSSLLRLGAAK, LNTSLSLWHR, ITPRLTLSHR, and NRAFVEFNKTF.

The protein belongs to the Slam family. As to quaternary structure, interacts with the C-terminal domain of surface lipoprotein TbpB.

It localises to the cell outer membrane. Functionally, required for correct export to the cell surface of some cell outer membrane lipoproteins both in Neisseria and heterologously in E.coli. The sequence is that of Surface lipoprotein assembly modifier 1 from Neisseria meningitidis serogroup B (strain ATCC BAA-335 / MC58).